Consider the following 566-residue polypeptide: Oxygen-dependent choline dehydrogenase (566 aa).

Position 7–36 (7–36 (DYIICGAGSAGNVLATRLTEDPNVTVLLLE)) interacts with FAD. The interval 182–204 (YQQEGFGPMDRTVTPKGRRASTA) is disordered. The active-site Proton acceptor is the His474.

The protein belongs to the GMC oxidoreductase family. FAD is required as a cofactor.

It carries out the reaction choline + A = betaine aldehyde + AH2. It catalyses the reaction betaine aldehyde + NAD(+) + H2O = glycine betaine + NADH + 2 H(+). It participates in amine and polyamine biosynthesis; betaine biosynthesis via choline pathway; betaine aldehyde from choline (cytochrome c reductase route): step 1/1. In terms of biological role, involved in the biosynthesis of the osmoprotectant glycine betaine. Catalyzes the oxidation of choline to betaine aldehyde and betaine aldehyde to glycine betaine at the same rate. The polypeptide is Oxygen-dependent choline dehydrogenase (Burkholderia multivorans (strain ATCC 17616 / 249)).